A 99-amino-acid polypeptide reads, in one-letter code: Large ribosomal subunit protein bL21 (99 aa).

It belongs to the bacterial ribosomal protein bL21 family. In terms of assembly, part of the 50S ribosomal subunit. Contacts protein L20.

Its function is as follows. This protein binds to 23S rRNA in the presence of protein L20. This Anaplasma phagocytophilum (strain HZ) protein is Large ribosomal subunit protein bL21.